Here is a 370-residue protein sequence, read N- to C-terminus: Selenide, water dikinase 2 (370 aa).

The active site involves Sec-24. Sec-24 is a non-standard amino acid (selenocysteine). ATP contacts are provided by residues Lys-27, 55-57 (GMD), Asp-76, and Asp-99. Asp-57 is a Mg(2+) binding site. Mg(2+) contacts are provided by Asp-99 and Asp-258.

This sequence belongs to the selenophosphate synthase 1 family. Class I subfamily. Homodimer. Mg(2+) is required as a cofactor. As to expression, first expressed in the midgut anlagen with subsequent expression in a variety of tissues including the gut and nervous system.

It catalyses the reaction hydrogenselenide + ATP + H2O = selenophosphate + AMP + phosphate + 2 H(+). In terms of biological role, synthesizes selenophosphate from selenide and ATP. The polypeptide is Selenide, water dikinase 2 (Sps2) (Drosophila melanogaster (Fruit fly)).